Consider the following 379-residue polypeptide: Serine/threonine-protein kinase spe-6 (379 aa).

The Protein kinase domain maps to tryptophan 26–threonine 302. ATP is bound by residues isoleucine 32–valine 40 and lysine 55. Aspartate 147 functions as the Proton acceptor in the catalytic mechanism. The tract at residues alanine 331 to lysine 379 is disordered. Over residues lysine 360–valine 372 the composition is skewed to polar residues.

The protein belongs to the protein kinase superfamily. CK1 Ser/Thr protein kinase family.

It carries out the reaction L-seryl-[protein] + ATP = O-phospho-L-seryl-[protein] + ADP + H(+). The enzyme catalyses L-threonyl-[protein] + ATP = O-phospho-L-threonyl-[protein] + ADP + H(+). Its function is as follows. Serine/threonine-protein kinase which is involved in spermatogenesis. In spermatocytes, regulates meiosis and the localization and assembly of major sperm protein (MSP) into fibrous bodies. In addition, may suppress the initiation of spermiogenesis downstream of spe-8, spe-12, spe-27 and spe-29. The protein is Serine/threonine-protein kinase spe-6 of Caenorhabditis elegans.